The following is a 57-amino-acid chain: Large ribosomal subunit protein bL32 (57 aa).

The segment covering 1–22 has biased composition (basic residues); the sequence is MAVPKKKTSKAKRDQRRAHWRR. The segment at 1-35 is disordered; that stretch reads MAVPKKKTSKAKRDQRRAHWRRQASSQAQKALSLG.

Belongs to the bacterial ribosomal protein bL32 family.

The chain is Large ribosomal subunit protein bL32 (rpmF) from Synechocystis sp. (strain ATCC 27184 / PCC 6803 / Kazusa).